A 323-amino-acid chain; its full sequence is Delta(7)-sterol 5(6)-desaturase ERG3B (323 aa).

The next 3 membrane-spanning stretches (helical) occupy residues 67-87, 112-132, and 150-170; these read ASILMIAGFGAAFIYVISAAL, IQSSFFAIPIIDLLTLPFFLG, and SWLAISTILYMVFNDLGIYWI. The 129-residue stretch at 157-285 folds into the Fatty acid hydroxylase domain; the sequence is ILYMVFNDLG…YFTWADNYWG (129 aa). The short motif at 171–175 is the Histidine box-1 element; it reads HRLEH. The short motif at 184 to 188 is the Histidine box-2 element; the sequence is HKPHH. The Histidine box-3 signature appears at 262-266; it reads HTLHH.

It belongs to the sterol desaturase family.

The protein resides in the endoplasmic reticulum membrane. The catalysed reaction is episterol + 2 Fe(II)-[cytochrome b5] + O2 + 2 H(+) = 5-dehydroepisterol + 2 Fe(III)-[cytochrome b5] + 2 H2O. Its pathway is steroid metabolism; ergosterol biosynthesis. C-5 sterol desaturase; part of the third module of ergosterol biosynthesis pathway that includes the late steps of the pathway. ERG3A and ERG3BB catalyze the introduction of a C-5 double bond in the B ring to produce 5-dehydroepisterol. The third module or late pathway involves the ergosterol synthesis itself through consecutive reactions that mainly occur in the endoplasmic reticulum (ER) membrane. Firstly, the squalene synthase ERG9 catalyzes the condensation of 2 farnesyl pyrophosphate moieties to form squalene, which is the precursor of all steroids. Squalene synthase is crucial for balancing the incorporation of farnesyl diphosphate (FPP) into sterol and nonsterol isoprene synthesis. Secondly, squalene is converted into lanosterol by the consecutive action of the squalene epoxidase ERG1 and the lanosterol synthase ERG7. Then, the delta(24)-sterol C-methyltransferase ERG6 methylates lanosterol at C-24 to produce eburicol. Eburicol is the substrate of the sterol 14-alpha demethylase encoded by CYP51A, CYP51B and CYP51C, to yield 4,4,24-trimethyl ergosta-8,14,24(28)-trienol. CYP51B encodes the enzyme primarily responsible for sterol 14-alpha-demethylation, and plays an essential role in ascospore formation. CYP51A encodes an additional sterol 14-alpha-demethylase, induced on ergosterol depletion and responsible for the intrinsic variation in azole sensitivity. The third CYP51 isoform, CYP51C, does not encode a sterol 14-alpha-demethylase, but is required for full virulence on host wheat ears. The C-14 reductase ERG24 then reduces the C14=C15 double bond which leads to 4,4-dimethylfecosterol. A sequence of further demethylations at C-4, involving the C-4 demethylation complex containing the C-4 methylsterol oxidases ERG25, the sterol-4-alpha-carboxylate 3-dehydrogenase ERG26 and the 3-keto-steroid reductase ERG27, leads to the production of fecosterol via 4-methylfecosterol. ERG28 has a role as a scaffold to help anchor ERG25, ERG26 and ERG27 to the endoplasmic reticulum. The C-8 sterol isomerase ERG2 then catalyzes the reaction which results in unsaturation at C-7 in the B ring of sterols and thus converts fecosterol to episterol. The sterol-C5-desaturases ERG3A and ERG3BB then catalyze the introduction of a C-5 double bond in the B ring to produce 5-dehydroepisterol. The C-22 sterol desaturases ERG5A and ERG5B further convert 5-dehydroepisterol into ergosta-5,7,22,24(28)-tetraen-3beta-ol by forming the C-22(23) double bond in the sterol side chain. Finally, ergosta-5,7,22,24(28)-tetraen-3beta-ol is substrate of the C-24(28) sterol reductase ERG4 to produce ergosterol. The chain is Delta(7)-sterol 5(6)-desaturase ERG3B from Gibberella zeae (strain ATCC MYA-4620 / CBS 123657 / FGSC 9075 / NRRL 31084 / PH-1) (Wheat head blight fungus).